The chain runs to 88 residues: Meiosis-expressed gene 1 protein (88 aa).

Belongs to the MEIG1 family. As to quaternary structure, interacts with PACRG. Interacts with MORN3. Expressed in the testes (at protein level). Expressed in the ovary. Several isoforms have been identified differing in their 5'-untranslated exons. These isoforms show different tissue expression. Some are expressed in various tissues, including lung, liver, brain, testis, oviduct and oocytes. Some are testis-specific.

Functionally, essential for spermiogenesis. This is Meiosis-expressed gene 1 protein from Mus musculus (Mouse).